The sequence spans 302 residues: Haloalkane dehalogenase (302 aa).

Residues 48–150 (PVLLMHGEPS…AGLVIANTGL (103 aa)) enclose the AB hydrolase-1 domain. D123 acts as the Nucleophile in catalysis. D249 functions as the Proton donor in the catalytic mechanism. H278 functions as the Proton acceptor in the catalytic mechanism.

The protein belongs to the haloalkane dehalogenase family. Type 1 subfamily. As to quaternary structure, monomer.

It catalyses the reaction 1-haloalkane + H2O = a halide anion + a primary alcohol + H(+). In terms of biological role, catalyzes hydrolytic cleavage of carbon-halogen bonds in halogenated aliphatic compounds, leading to the formation of the corresponding primary alcohols, halide ions and protons. This Caulobacter sp. (strain K31) protein is Haloalkane dehalogenase.